A 605-amino-acid polypeptide reads, in one-letter code: Elongation factor 4 (605 aa).

One can recognise a tr-type G domain in the interval 9-192; it reads CRIRNFCIIA…SIVHRIPPPA (184 aa). GTP-binding positions include 21 to 26 and 139 to 142; these read DHGKST and NKID.

The protein belongs to the TRAFAC class translation factor GTPase superfamily. Classic translation factor GTPase family. LepA subfamily.

Its subcellular location is the cell inner membrane. The enzyme catalyses GTP + H2O = GDP + phosphate + H(+). In terms of biological role, required for accurate and efficient protein synthesis under certain stress conditions. May act as a fidelity factor of the translation reaction, by catalyzing a one-codon backward translocation of tRNAs on improperly translocated ribosomes. Back-translocation proceeds from a post-translocation (POST) complex to a pre-translocation (PRE) complex, thus giving elongation factor G a second chance to translocate the tRNAs correctly. Binds to ribosomes in a GTP-dependent manner. The polypeptide is Elongation factor 4 (Chlorobium chlorochromatii (strain CaD3)).